The sequence spans 447 residues: Phosphoglucosamine mutase (447 aa).

Serine 104 serves as the catalytic Phosphoserine intermediate. Mg(2+)-binding residues include serine 104, aspartate 243, aspartate 245, and aspartate 247. Serine 104 carries the phosphoserine modification.

The protein belongs to the phosphohexose mutase family. Requires Mg(2+) as cofactor. Activated by phosphorylation.

The enzyme catalyses alpha-D-glucosamine 1-phosphate = D-glucosamine 6-phosphate. Functionally, catalyzes the conversion of glucosamine-6-phosphate to glucosamine-1-phosphate. The sequence is that of Phosphoglucosamine mutase from Corynebacterium aurimucosum (strain ATCC 700975 / DSM 44827 / CIP 107346 / CN-1) (Corynebacterium nigricans).